A 668-amino-acid chain; its full sequence is DNA ligase (668 aa).

Residues D32–D36, S81–L82, and E111 contribute to the NAD(+) site. K113 acts as the N6-AMP-lysine intermediate in catalysis. NAD(+)-binding residues include R134, E171, K290, and K314. Residues C408, C411, C426, and C432 each coordinate Zn(2+). In terms of domain architecture, BRCT spans E591 to S668.

This sequence belongs to the NAD-dependent DNA ligase family. LigA subfamily. Mg(2+) is required as a cofactor. Mn(2+) serves as cofactor.

The catalysed reaction is NAD(+) + (deoxyribonucleotide)n-3'-hydroxyl + 5'-phospho-(deoxyribonucleotide)m = (deoxyribonucleotide)n+m + AMP + beta-nicotinamide D-nucleotide.. In terms of biological role, DNA ligase that catalyzes the formation of phosphodiester linkages between 5'-phosphoryl and 3'-hydroxyl groups in double-stranded DNA using NAD as a coenzyme and as the energy source for the reaction. It is essential for DNA replication and repair of damaged DNA. In Shewanella pealeana (strain ATCC 700345 / ANG-SQ1), this protein is DNA ligase.